The chain runs to 238 residues: Probable tetraspanin tspC (238 aa).

Topologically, residues 1–16 (MVNTRDFLPKTTHYLK) are cytoplasmic. Residues 17 to 37 (VPIIGLNAILWLLGLVLIVVG) form a helical membrane-spanning segment. The Extracellular segment spans residues 38–69 (SVCISFFSNFKEFTKESGYKNALSNLTTSAPT). Asn62 is a glycosylation site (N-linked (GlcNAc...) asparagine). Residues 70 to 90 (GVLVIGIFFILLTLVGCFVAY) traverse the membrane as a helical segment. Residues 91-93 (KEK) lie on the Cytoplasmic side of the membrane. A helical membrane pass occupies residues 94–114 (LVGLVLYTMLMLILLVVLIGI). Residues 115-197 (GGKALTLDKE…GIFTKQVSSK (83 aa)) are Extracellular-facing. 2 N-linked (GlcNAc...) asparagine glycosylation sites follow: Asn143 and Asn164. A helical membrane pass occupies residues 198 to 218 (LVLVGIAGVVIGCIEFVAMAL). The Cytoplasmic portion of the chain corresponds to 219-238 (SLFLIIRICRSPRSRAYDQY).

The protein belongs to the tetraspanin (TM4SF) family.

The protein localises to the membrane. This Dictyostelium discoideum (Social amoeba) protein is Probable tetraspanin tspC (tspC).